We begin with the raw amino-acid sequence, 193 residues long: Ion-translocating oxidoreductase complex subunit A (193 aa).

A run of 6 helical transmembrane segments spans residues 5-25 (ALLF…FLGL), 39-59 (IGMG…SWLI), 62-82 (FILV…LVLA), 102-122 (LLGI…VVLL), 134-154 (TIYG…FAAI), and 171-191 (SIAL…TGLV).

The protein belongs to the NqrDE/RnfAE family. In terms of assembly, the complex is composed of six subunits: RnfA, RnfB, RnfC, RnfD, RnfE and RnfG.

It localises to the cell inner membrane. Functionally, part of a membrane-bound complex that couples electron transfer with translocation of ions across the membrane. The polypeptide is Ion-translocating oxidoreductase complex subunit A (Pectobacterium atrosepticum (strain SCRI 1043 / ATCC BAA-672) (Erwinia carotovora subsp. atroseptica)).